A 198-amino-acid chain; its full sequence is Holliday junction branch migration complex subunit RuvA (198 aa).

Positions 1 to 63 are domain I; sequence MYDYIKGQLT…EDAHLLFGFH (63 aa). The segment at 64–142 is domain II; sequence TEDEKDVFLK…EAPQETGNTK (79 aa). The tract at residues 143 to 147 is flexible linker; it reads ARSNK. The segment at 148-198 is domain III; it reads AGNTQLDEAIEALLALGYKAAELKKIRAFFEGTSETAEQYIKSALKLLMKG.

This sequence belongs to the RuvA family. In terms of assembly, homotetramer. Forms an RuvA(8)-RuvB(12)-Holliday junction (HJ) complex. HJ DNA is sandwiched between 2 RuvA tetramers; dsDNA enters through RuvA and exits via RuvB. An RuvB hexamer assembles on each DNA strand where it exits the tetramer. Each RuvB hexamer is contacted by two RuvA subunits (via domain III) on 2 adjacent RuvB subunits; this complex drives branch migration. In the full resolvosome a probable DNA-RuvA(4)-RuvB(12)-RuvC(2) complex forms which resolves the HJ.

Its subcellular location is the cytoplasm. In terms of biological role, the RuvA-RuvB-RuvC complex processes Holliday junction (HJ) DNA during genetic recombination and DNA repair, while the RuvA-RuvB complex plays an important role in the rescue of blocked DNA replication forks via replication fork reversal (RFR). RuvA specifically binds to HJ cruciform DNA, conferring on it an open structure. The RuvB hexamer acts as an ATP-dependent pump, pulling dsDNA into and through the RuvAB complex. HJ branch migration allows RuvC to scan DNA until it finds its consensus sequence, where it cleaves and resolves the cruciform DNA. The protein is Holliday junction branch migration complex subunit RuvA of Streptococcus pyogenes serotype M28 (strain MGAS6180).